A 300-amino-acid chain; its full sequence is Cation-efflux pump FieF (300 aa).

The helical transmembrane segment at Leu24–Val44 threads the bilayer. Zn(2+)-binding residues include Asp45 and Asp49. 2 helical membrane passes run Ala82–Ile102 and Pro114–Phe134. His153 and Asp157 together coordinate Zn(2+). A run of 2 helical transmembrane segments spans residues Ser156–His176 and Ala178–Gly198.

The protein belongs to the cation diffusion facilitator (CDF) transporter (TC 2.A.4) family. FieF subfamily. As to quaternary structure, homodimer.

It localises to the cell inner membrane. The catalysed reaction is Zn(2+)(in) + H(+)(out) = Zn(2+)(out) + H(+)(in). It carries out the reaction Cd(2+)(in) + H(+)(out) = Cd(2+)(out) + H(+)(in). The enzyme catalyses Fe(2+)(in) + H(+)(out) = Fe(2+)(out) + H(+)(in). Divalent metal cation transporter which exports Zn(2+), Cd(2+) and possibly Fe(2+). May be involved in zinc and iron detoxification by efflux. This Salmonella enteritidis PT4 (strain P125109) protein is Cation-efflux pump FieF.